A 90-amino-acid polypeptide reads, in one-letter code: Movement protein (90 aa).

Residues 32–52 form a helical membrane-spanning segment; the sequence is FVFVTFGLLIAVGVAWLAYTL.

Belongs to the mastrevirus movement protein family. Interacts with the capsid protein (CP). Part of a MP-CP-viral DNA complex.

The protein resides in the host membrane. In terms of biological role, involved in the viral transport within, and between cells. This chain is Movement protein, found in Wheat dwarf virus (isolate Sweden) (WDV).